Consider the following 553-residue polypeptide: Glutamate--tRNA ligase (553 aa).

A 'HIGH' region motif is present at residues 103 to 113; that stretch reads PNPSGPLHIGH.

This sequence belongs to the class-I aminoacyl-tRNA synthetase family. Glutamate--tRNA ligase type 2 subfamily.

It localises to the cytoplasm. The catalysed reaction is tRNA(Glu) + L-glutamate + ATP = L-glutamyl-tRNA(Glu) + AMP + diphosphate. Its function is as follows. Catalyzes the attachment of glutamate to tRNA(Glu) in a two-step reaction: glutamate is first activated by ATP to form Glu-AMP and then transferred to the acceptor end of tRNA(Glu). This chain is Glutamate--tRNA ligase, found in Methanothermobacter thermautotrophicus (strain ATCC 29096 / DSM 1053 / JCM 10044 / NBRC 100330 / Delta H) (Methanobacterium thermoautotrophicum).